The primary structure comprises 260 residues: Lysozyme D (260 aa).

Residues 1-19 (MRLLVTLILLIFVLTVSGQ) form the signal peptide. Positions 83 to 148 (GSTTTGGTGS…SGGSSGSGSG (66 aa)) are disordered. Gly residues-rich tracts occupy residues 101–119 (SGSGSGSGSGSGSGSGSGT) and 129–147 (SGSGSGSSSGSGGSSGSGS).

Belongs to the dictyostelium lysozyme family. Post-translationally, contains disulfide bonds.

It localises to the cytoplasmic vesicle lumen. It catalyses the reaction Hydrolysis of (1-&gt;4)-beta-linkages between N-acetylmuramic acid and N-acetyl-D-glucosamine residues in a peptidoglycan and between N-acetyl-D-glucosamine residues in chitodextrins.. Has antibacterial activity. The chain is Lysozyme D (alyD-1) from Dictyostelium discoideum (Social amoeba).